Reading from the N-terminus, the 364-residue chain is Peptide chain release factor 1 (364 aa).

Glutamine 232 is modified (N5-methylglutamine).

Belongs to the prokaryotic/mitochondrial release factor family. Post-translationally, methylated by PrmC. Methylation increases the termination efficiency of RF1.

The protein resides in the cytoplasm. Its function is as follows. Peptide chain release factor 1 directs the termination of translation in response to the peptide chain termination codons UAG and UAA. This Sorangium cellulosum (strain So ce56) (Polyangium cellulosum (strain So ce56)) protein is Peptide chain release factor 1.